We begin with the raw amino-acid sequence, 155 residues long: FUN14 domain-containing protein 1 (155 aa).

At 1–47 (MATRNPPPQEYESDDDSYEVLDLTEYARRHHWWNRVFGHSSGPMVEK) the chain is on the cytoplasmic side. Phosphoserine is present on residues serine 13 and serine 17. The residue at position 18 (tyrosine 18) is a Phosphotyrosine; by SRC. The YXXL motif lies at 18 to 21 (YEVL). The helical transmembrane segment at 48 to 68 (YSVATQIVMGGVSGWCAGFLF) threads the bilayer. Residues 69 to 74 (QKVGKL) lie on the Mitochondrial intermembrane side of the membrane. The helical transmembrane segment at 75 to 95 (AATAVGGGFLLLQIASHSGYV) threads the bilayer. Residues 96 to 133 (QIDWKRVEKDVNKAKRQIKKRANKAAPEINNIIEEATE) lie on the Cytoplasmic side of the membrane. A Glycyl lysine isopeptide (Lys-Gly) (interchain with G-Cter in ubiquitin) cross-link involves residue lysine 119. A helical membrane pass occupies residues 134-154 (FVKQNIVISSGFVGGFLLGLA). Serine 155 is a topological domain (mitochondrial intermembrane).

This sequence belongs to the FUN14 family. As to quaternary structure, interacts (via YXXL motif) with MAP1 LC3 family proteins MAP1LC3A, MAP1LC3B and GABARAP. Interacts with DNM1L/DPR1. Interacts with GPX4. Phosphorylation at Ser-13 by CK2 and at Tyr-18 by SRC inhibits activation of mitophagy. Following hypoxia, dephosphorylated at Tyr-18, leading to interaction with MAP1 LC3 family proteins and triggering mitophagy. Dephosphorylation is mediated by PGAM5. Phosphorylated by ULK1 at Ser-17 which enhances FUNDC1 binding to LC3. In terms of processing, ubiquitinated on Lys-119. Deubiquitinated by USP19; leading to hypoxia-induced DRP1 oligomerization and GTPase activity.

It localises to the mitochondrion outer membrane. In terms of biological role, integral mitochondrial outer-membrane protein that mediates the formation of mitochondria-associated endoplasmic reticulum membranes (MAMs). In turn, mediates angiogenesis and neoangiogenesis through interference with intracellular Ca(2+) communication and regulation of the vascular endothelial growth factor receptor KDR/VEGFR2 expression at both mRNA and protein levels. Also acts as an activator of hypoxia-induced mitophagy, an important mechanism for mitochondrial quality and homeostasis, by interacting with and recruiting LC3 protein family to mitochondria. Mechanistically, recruits DRP1 at ER-mitochondria contact sites leading to DRP1 oligomerization and GTPase activity to facilitate mitochondrial fission during hypoxia. Additionally, plays a role in hepatic ferroptosis by interacting directly with glutathione peroxidase/GPX4 to facilitate its recruitment into mitochondria through TOM/TIM complex where it is degraded by mitophagy. The chain is FUN14 domain-containing protein 1 (FUNDC1) from Bos taurus (Bovine).